We begin with the raw amino-acid sequence, 324 residues long: COP9 signalosome complex subunit 6 (324 aa).

In terms of domain architecture, MPN spans V38–I171.

This sequence belongs to the peptidase M67A family. CSN6 subfamily. In terms of assembly, component of the CSN complex, composed of COPS1/GPS1, COPS2, COPS3, COPS4, COPS5, COPS6, COPS7 (COPS7A or COPS7B), COPS8 and COPS9. In the complex, it probably interacts directly with COPS2, COPS4, COPS5, COPS7 (COPS7A or COPS7B) and COPS9. Interacts with the translation initiation factor EIF3S6. Interacts weakly with RBX1. Directly interacts with COP1 and 14-3-3 protein sigma/SFN. Interacts with ERCC6.

It is found in the cytoplasm. It localises to the nucleus. In terms of biological role, component of the COP9 signalosome complex (CSN), a complex involved in various cellular and developmental processes. The CSN complex is an essential regulator of the ubiquitin (Ubl) conjugation pathway by mediating the deneddylation of the cullin subunits of SCF-type E3 ligase complexes, leading to decrease the Ubl ligase activity of SCF-type complexes such as SCF, CSA or DDB2. The complex is also involved in phosphorylation of p53/TP53, c-jun/JUN, IkappaBalpha/NFKBIA, ITPK1 and IRF8, possibly via its association with CK2 and PKD kinases. CSN-dependent phosphorylation of TP53 and JUN promotes and protects degradation by the Ubl system, respectively. Has some glucocorticoid receptor-responsive activity. Stabilizes COP1 through reducing COP1 auto-ubiquitination and decelerating COP1 turnover rate, hence regulates the ubiquitination of COP1 targets, including SFN. In Mus musculus (Mouse), this protein is COP9 signalosome complex subunit 6 (Cops6).